The following is a 462-amino-acid chain: Adenosylhomocysteinase (462 aa).

Residues Thr-55, Asp-128, and Glu-188 each contribute to the substrate site. Thr-189–Thr-191 contributes to the NAD(+) binding site. Positions 218 and 222 each coordinate substrate. NAD(+) is bound by residues Asn-223, Gly-252 to Gly-257, Glu-275, Asn-310, Ile-331 to His-333, and Asn-376.

Belongs to the adenosylhomocysteinase family. NAD(+) serves as cofactor.

Its subcellular location is the cytoplasm. It carries out the reaction S-adenosyl-L-homocysteine + H2O = L-homocysteine + adenosine. Its pathway is amino-acid biosynthesis; L-homocysteine biosynthesis; L-homocysteine from S-adenosyl-L-homocysteine: step 1/1. Its function is as follows. May play a key role in the regulation of the intracellular concentration of adenosylhomocysteine. This Roseobacter denitrificans (strain ATCC 33942 / OCh 114) (Erythrobacter sp. (strain OCh 114)) protein is Adenosylhomocysteinase.